A 50-amino-acid chain; its full sequence is U3-ctenitoxin-Asp1a (50 aa).

In terms of tissue distribution, expressed by the venom gland.

The protein resides in the secreted. In terms of biological role, possible neurotoxin. This is U3-ctenitoxin-Asp1a from Ancylometes sp. (South American fishing spider).